Reading from the N-terminus, the 160-residue chain is Ribonuclease H (160 aa).

One can recognise an RNase H type-1 domain in the interval 1-157; it reads MNIEIYTDGA…CDRLAVEACQ (157 aa). Residues aspartate 8, glutamate 49, aspartate 85, and aspartate 149 each contribute to the Mg(2+) site.

Belongs to the RNase H family. As to quaternary structure, monomer. Requires Mg(2+) as cofactor.

The protein localises to the cytoplasm. The catalysed reaction is Endonucleolytic cleavage to 5'-phosphomonoester.. In terms of biological role, endonuclease that specifically degrades the RNA of RNA-DNA hybrids. The chain is Ribonuclease H from Treponema denticola (strain ATCC 35405 / DSM 14222 / CIP 103919 / JCM 8153 / KCTC 15104).